The sequence spans 140 residues: Protein S40-1 (140 aa).

Positions 16–58 (YFPIRRREDGNEKENNRPVDFRENSERVWNKSSRRSKTTPLPS) are disordered. Over residues 20 to 44 (RRREDGNEKENNRPVDFRENSERVW) the composition is skewed to basic and acidic residues.

The protein belongs to the senescence regulator S40 family.

It localises to the cytoplasm. In Arabidopsis thaliana (Mouse-ear cress), this protein is Protein S40-1.